The chain runs to 238 residues: Purine nucleoside phosphorylase DeoD-type (238 aa).

An a purine D-ribonucleoside-binding site is contributed by His4. Phosphate-binding positions include Gly20, Arg24, Arg43, and 87 to 90; that span reads RVGS. A purine D-ribonucleoside contacts are provided by residues 179-181 and 203-204; these read EME and SD. Asp204 functions as the Proton donor in the catalytic mechanism.

The protein belongs to the PNP/UDP phosphorylase family. Homohexamer; trimer of homodimers.

The catalysed reaction is a purine D-ribonucleoside + phosphate = a purine nucleobase + alpha-D-ribose 1-phosphate. The enzyme catalyses a purine 2'-deoxy-D-ribonucleoside + phosphate = a purine nucleobase + 2-deoxy-alpha-D-ribose 1-phosphate. Functionally, catalyzes the reversible phosphorolytic breakdown of the N-glycosidic bond in the beta-(deoxy)ribonucleoside molecules, with the formation of the corresponding free purine bases and pentose-1-phosphate. The protein is Purine nucleoside phosphorylase DeoD-type of Histophilus somni (strain 2336) (Haemophilus somnus).